Reading from the N-terminus, the 97-residue chain is Class II hydrophobin 3 (97 aa).

A signal peptide spans 1–16 (MKFFAAAALFIAGVLA). Cystine bridges form between cysteine 30-cysteine 79, cysteine 40-cysteine 70, cysteine 41-cysteine 53, and cysteine 80-cysteine 91.

The protein belongs to the cerato-ulmin hydrophobin family. Homodimer. Homodimers further self-assemble to form highly ordered films at water-air interfaces through intermolecular interactions.

Its subcellular location is the secreted. It is found in the cell wall. Functionally, aerial growth, conidiation, and dispersal of filamentous fungi in the environment rely upon a capability of their secreting small amphipathic proteins called hydrophobins (HPBs) with low sequence identity. Class I can self-assemble into an outermost layer of rodlet bundles on aerial cell surfaces, conferring cellular hydrophobicity that supports fungal growth, development and dispersal; whereas Class II form highly ordered films at water-air interfaces through intermolecular interactions but contribute nothing to the rodlet structure. The sequence is that of Class II hydrophobin 3 from Trichoderma asperellum (strain ATCC 204424 / CBS 433.97 / NBRC 101777).